The primary structure comprises 600 residues: MCGIVGFIGEQDAKEILLKGLEKLEYRGYDSAGIAVQAENGVVVYKEKGRIAKLREIVDENVAASVGIGHTRWATHGVPSKVNAHPHQSTSKRFTLVHNGVIENYELVKKEYLQDVTFVSETDTEVIVQLMEQQVSTGLSVEEAFRNTLSLLHGSYAIGLLDAENPNMIYVAKNKSPLLVGVGDNFNVVASDAMAMLQVTDQFIELMDKEIVIVMKESITIKNLQGETIERAPFTAELDASDIEKGTYPHFMLKEIDEQPLVIRNIIQKYQDENGEIELDQDIRNAILDSDRIYIIACGTSYHAGLVGKQFIEKFAKMPVEVHVASEFSYNMPLLTERPFFIYISQSGETADSRAVLVQTNEMGHKALTITNVPGSTLSREADYTLPLYAGPEIAVASTKAYTAQLAVLSILAADIAKAKGEVLGFDLTHELGLVANAMIELCDQKEEMDALAKQFLATTRNCFFIGRSVDFYVGLEGALKLKEISYIQAEGFAGGELKHGTIALIENGTPVIALATQEHVNLGIRGNVKEVVARGANPCIISMKGLEMEGDSFVLPAVHEALAPLVAVIPLQLISYYAALHRECDVDKPRNLAKSVTVE.

Cys2 acts as the Nucleophile; for GATase activity in catalysis. The region spanning 2–217 (CGIVGFIGEQ…DKEIVIVMKE (216 aa)) is the Glutamine amidotransferase type-2 domain. SIS domains lie at 283–422 (IRNA…AKGE) and 452–590 (LAKQ…VDKP). Lys595 serves as the catalytic For Fru-6P isomerization activity.

In terms of assembly, homodimer.

It localises to the cytoplasm. The enzyme catalyses D-fructose 6-phosphate + L-glutamine = D-glucosamine 6-phosphate + L-glutamate. Functionally, catalyzes the first step in hexosamine metabolism, converting fructose-6P into glucosamine-6P using glutamine as a nitrogen source. The protein is Glutamine--fructose-6-phosphate aminotransferase [isomerizing] of Bacillus anthracis.